The following is an 80-amino-acid chain: Three-finger toxin MALT0059C (80 aa).

Positions 1–21 (MRTLLLTLVVVTIVCLDLGNS) are cleaved as a signal peptide. Intrachain disulfides connect C24–C41, C35–C60, C64–C72, and C73–C78.

It belongs to the three-finger toxin family. Short-chain subfamily. In terms of tissue distribution, expressed by the venom gland.

The protein resides in the secreted. Neurotoxin. Blocks muscular nicotinic acetylcholine receptors (nAChR). The sequence is that of Three-finger toxin MALT0059C from Micrurus altirostris (Uruguayan coral snake).